A 432-amino-acid polypeptide reads, in one-letter code: Amino-acid acetyltransferase (432 aa).

One can recognise an N-acetyltransferase domain in the interval 286–425 (ESLREATIED…ASLYNYQRNS (140 aa)).

Belongs to the acetyltransferase family. ArgA subfamily.

It is found in the cytoplasm. It carries out the reaction L-glutamate + acetyl-CoA = N-acetyl-L-glutamate + CoA + H(+). It participates in amino-acid biosynthesis; L-arginine biosynthesis; N(2)-acetyl-L-ornithine from L-glutamate: step 1/4. In Ectopseudomonas mendocina (strain ymp) (Pseudomonas mendocina), this protein is Amino-acid acetyltransferase.